A 358-amino-acid chain; its full sequence is Core-capsid bridging protein (358 aa).

Positions 296-331 (PSITPTPGYRGTTFKPSRTRSTRRRRSVRRRSRRTA) are disordered. Residues 312–329 (SRTRSTRRRRSVRRRSRR) are compositionally biased toward basic residues.

The protein belongs to the adenoviridae core-capsid bridging protein family. In terms of assembly, monomer. Homodimer. Exists in equilibrium between monomers and dimers in solution. Interacts with the histone-like nucleoprotein; this interactions bridge the virus core to the capsid. Interacts with core protein X; this interactions bridge the virus core to the capsid. Interacts with the endosome lysis protein VI; this interactions bridge the virus core to the capsid. Interacts with the peripentonal hexons. Interacts with host NPM1; this interaction might play a role in virus assembly.

It is found in the virion. The protein localises to the host nucleus. The protein resides in the host nucleolus. Functionally, associates loosely with the viral DNA to form an outer shell around the nucleoprotein-DNA complex and links it with the capsid by binding the endosome lysis protein. Dissociates from the viral genome during entry. Might be involved in nuclear capsid assembly of the viral particles through its association with NPM1/nucleophosmin. The chain is Core-capsid bridging protein from Human adenovirus F serotype 40 (HAdV-40).